The chain runs to 718 residues: Polyribonucleotide nucleotidyltransferase (718 aa).

The Mg(2+) site is built by Asp506 and Asp512. One can recognise a KH domain in the interval 572-632 (PKLELFSVDP…EQIKAAKDYI (61 aa)). The S1 motif domain maps to 657–718 (GQEFQGIVKK…NGKISVDLCE (62 aa)).

Belongs to the polyribonucleotide nucleotidyltransferase family. Mg(2+) is required as a cofactor.

It localises to the cytoplasm. The enzyme catalyses RNA(n+1) + phosphate = RNA(n) + a ribonucleoside 5'-diphosphate. Involved in mRNA degradation. Catalyzes the phosphorolysis of single-stranded polyribonucleotides processively in the 3'- to 5'-direction. This is Polyribonucleotide nucleotidyltransferase from Campylobacter jejuni subsp. doylei (strain ATCC BAA-1458 / RM4099 / 269.97).